A 125-amino-acid polypeptide reads, in one-letter code: Holo-[acyl-carrier-protein] synthase (125 aa).

Asp8 and Glu57 together coordinate Mg(2+).

Belongs to the P-Pant transferase superfamily. AcpS family. Mg(2+) serves as cofactor.

The protein resides in the cytoplasm. The catalysed reaction is apo-[ACP] + CoA = holo-[ACP] + adenosine 3',5'-bisphosphate + H(+). In terms of biological role, transfers the 4'-phosphopantetheine moiety from coenzyme A to a Ser of acyl-carrier-protein. The chain is Holo-[acyl-carrier-protein] synthase from Thermus thermophilus (strain ATCC BAA-163 / DSM 7039 / HB27).